We begin with the raw amino-acid sequence, 270 residues long: Urease accessory protein UreD (270 aa).

It belongs to the UreD family. UreD, UreF and UreG form a complex that acts as a GTP-hydrolysis-dependent molecular chaperone, activating the urease apoprotein by helping to assemble the nickel containing metallocenter of UreC. The UreE protein probably delivers the nickel.

It is found in the cytoplasm. Its function is as follows. Required for maturation of urease via the functional incorporation of the urease nickel metallocenter. The protein is Urease accessory protein UreD of Synechocystis sp. (strain ATCC 27184 / PCC 6803 / Kazusa).